Consider the following 83-residue polypeptide: Putative defensin-like protein 111 (83 aa).

A signal peptide spans 1–24; it reads MAITKKILLPFVLTILFVISSVHC. 4 cysteine pairs are disulfide-bonded: Cys-40/Cys-80, Cys-46/Cys-69, Cys-54/Cys-78, and Cys-58/Cys-79.

The protein belongs to the DEFL family.

The protein localises to the secreted. This Arabidopsis thaliana (Mouse-ear cress) protein is Putative defensin-like protein 111 (LCR50).